The chain runs to 72 residues: Translational regulator CsrA (72 aa).

It belongs to the CsrA/RsmA family. In terms of assembly, homodimer; the beta-strands of each monomer intercalate to form a hydrophobic core, while the alpha-helices form wings that extend away from the core.

It is found in the cytoplasm. A translational regulator that binds mRNA to regulate translation initiation and/or mRNA stability. Usually binds in the 5'-UTR at or near the Shine-Dalgarno sequence preventing ribosome-binding, thus repressing translation. Its main target seems to be the major flagellin gene, while its function is anatagonized by FliW. This Clostridium botulinum (strain 657 / Type Ba4) protein is Translational regulator CsrA.